We begin with the raw amino-acid sequence, 180 residues long: Probable macrolide acetyltransferase (180 aa).

The protein belongs to the transferase hexapeptide repeat family.

This Lysinibacillus sphaericus (Bacillus sphaericus) protein is Probable macrolide acetyltransferase.